The primary structure comprises 316 residues: 4-hydroxy-3-methylbut-2-enyl diphosphate reductase (316 aa).

[4Fe-4S] cluster is bound at residue Cys-12. (2E)-4-hydroxy-3-methylbut-2-enyl diphosphate contacts are provided by His-41 and His-74. Residues His-41 and His-74 each contribute to the dimethylallyl diphosphate site. Isopentenyl diphosphate contacts are provided by His-41 and His-74. Position 96 (Cys-96) interacts with [4Fe-4S] cluster. His-124 contributes to the (2E)-4-hydroxy-3-methylbut-2-enyl diphosphate binding site. His-124 contacts dimethylallyl diphosphate. Residue His-124 coordinates isopentenyl diphosphate. The active-site Proton donor is the Glu-126. Thr-167 provides a ligand contact to (2E)-4-hydroxy-3-methylbut-2-enyl diphosphate. A [4Fe-4S] cluster-binding site is contributed by Cys-197. 4 residues coordinate (2E)-4-hydroxy-3-methylbut-2-enyl diphosphate: Ser-225, Ser-226, Asn-227, and Ser-269. Residues Ser-225, Ser-226, Asn-227, and Ser-269 each contribute to the dimethylallyl diphosphate site. The isopentenyl diphosphate site is built by Ser-225, Ser-226, Asn-227, and Ser-269.

The protein belongs to the IspH family. In terms of assembly, homodimer. [4Fe-4S] cluster serves as cofactor.

The catalysed reaction is isopentenyl diphosphate + 2 oxidized [2Fe-2S]-[ferredoxin] + H2O = (2E)-4-hydroxy-3-methylbut-2-enyl diphosphate + 2 reduced [2Fe-2S]-[ferredoxin] + 2 H(+). The enzyme catalyses dimethylallyl diphosphate + 2 oxidized [2Fe-2S]-[ferredoxin] + H2O = (2E)-4-hydroxy-3-methylbut-2-enyl diphosphate + 2 reduced [2Fe-2S]-[ferredoxin] + 2 H(+). It participates in isoprenoid biosynthesis; dimethylallyl diphosphate biosynthesis; dimethylallyl diphosphate from (2E)-4-hydroxy-3-methylbutenyl diphosphate: step 1/1. The protein operates within isoprenoid biosynthesis; isopentenyl diphosphate biosynthesis via DXP pathway; isopentenyl diphosphate from 1-deoxy-D-xylulose 5-phosphate: step 6/6. Catalyzes the conversion of 1-hydroxy-2-methyl-2-(E)-butenyl 4-diphosphate (HMBPP) into a mixture of isopentenyl diphosphate (IPP) and dimethylallyl diphosphate (DMAPP). Acts in the terminal step of the DOXP/MEP pathway for isoprenoid precursor biosynthesis. The polypeptide is 4-hydroxy-3-methylbut-2-enyl diphosphate reductase (Salmonella typhi).